The sequence spans 1328 residues: Tubulin polyglutamylase TTLL5 (1328 aa).

Residues 1-22 form a disordered region; the sequence is MPVVMARDLEETASSSEDEDLA. In terms of domain architecture, TTL spans 62-407; that stretch reads RYHLSYKIVR…VCQDPAQRTS (346 aa). Residues K180, 186–187, 208–211, and 221–223 contribute to the ATP site; these read RG, SRYI, and KFD. R186 is an a protein binding site. R247 serves as a coordination point for L-glutamate. An ATP-binding site is contributed by 268 to 269; it reads TN. Residues Y270, S271, and K293 each coordinate L-glutamate. 3 residues coordinate Mg(2+): D353, E366, and N368. The segment at 378-488 is c-MTBD region; sequence PLDLKIKASM…RGGFIRIFPT (111 aa). K384 is an L-glutamate binding site. 7 disordered regions span residues 411 to 436, 585 to 631, 834 to 853, 948 to 975, 1006 to 1032, 1085 to 1129, and 1212 to 1271; these read IYPS…SASD, AQPA…QAKY, HSKS…KGDH, PALL…PAGL, SSAK…EGED, RSSA…LQTG, and RISS…QLNG. Positions 420-432 are enriched in polar residues; that stretch reads RNPFQKPQRTRPL. Acidic residues predominate over residues 597 to 617; that stretch reads ESEEEEEVGLDNDDEEQEASQ. Positions 838 to 847 are enriched in low complexity; it reads SKNSSSYSDS. Composition is skewed to polar residues over residues 1116–1128, 1214–1227, 1234–1248, and 1257–1271; these read THSS…SLQT, SSAT…NTLP, PNSS…SNHK, and QRAS…QLNG.

Belongs to the tubulin--tyrosine ligase family. Interacts with the transcriptional coactivators NCOA1/SRC-1 and NCOA2/TIF2. It depends on Mg(2+) as a cofactor. Highly expressed in brain, kidney, liver, spleen and testis. Expressed in heart, lung, muscle and trachea.

The protein resides in the cell projection. Its subcellular location is the cilium. It localises to the cytoplasm. The protein localises to the cytoskeleton. It is found in the cilium basal body. The protein resides in the nucleus. It carries out the reaction L-glutamyl-[protein] + L-glutamate + ATP = gamma-L-glutamyl-L-glutamyl-[protein] + ADP + phosphate + H(+). The catalysed reaction is (L-glutamyl)(n)-gamma-L-glutamyl-L-glutamyl-[protein] + L-glutamate + ATP = (L-glutamyl)(n+1)-gamma-L-glutamyl-L-glutamyl-[protein] + ADP + phosphate + H(+). Functionally, polyglutamylase which modifies tubulin, generating polyglutamate side chains on the gamma-carboxyl group of specific glutamate residues within the C-terminal tail of tubulin. Preferentially mediates ATP-dependent initiation step of the polyglutamylation reaction over the elongation step. Preferentially modifies the alpha-tubulin tail over a beta-tail. Required for CCSAP localization to both polyglutamylated spindle and cilia microtubules. Increases the effects of transcriptional coactivator NCOA2/TIF2 in glucocorticoid receptor-mediated repression and induction and in androgen receptor-mediated induction. This is Tubulin polyglutamylase TTLL5 from Mus musculus (Mouse).